Reading from the N-terminus, the 159-residue chain is Transcriptional repressor NrdR (159 aa).

A zinc finger lies at 3–34 (CPFCHTPDTSVIDSRVSEEGDRIRRRRRCPHC). The region spanning 49-139 (PQVVKQDGNR…VYRSFQGAAD (91 aa)) is the ATP-cone domain.

It belongs to the NrdR family. Zn(2+) serves as cofactor.

Negatively regulates transcription of bacterial ribonucleotide reductase nrd genes and operons by binding to NrdR-boxes. The chain is Transcriptional repressor NrdR from Nitrosospira multiformis (strain ATCC 25196 / NCIMB 11849 / C 71).